A 197-amino-acid polypeptide reads, in one-letter code: Glycerol-3-phosphate acyltransferase (197 aa).

5 helical membrane-spanning segments follow: residues 7 to 27, 56 to 76, 82 to 102, 116 to 136, and 157 to 177; these read PSIA…LLLT, LAAL…WIAW, DIGW…WLGF, FGLG…MLAI, and YFGR…IIWL.

This sequence belongs to the PlsY family. As to quaternary structure, probably interacts with PlsX.

The protein localises to the cell inner membrane. The enzyme catalyses an acyl phosphate + sn-glycerol 3-phosphate = a 1-acyl-sn-glycero-3-phosphate + phosphate. It functions in the pathway lipid metabolism; phospholipid metabolism. Its function is as follows. Catalyzes the transfer of an acyl group from acyl-phosphate (acyl-PO(4)) to glycerol-3-phosphate (G3P) to form lysophosphatidic acid (LPA). This enzyme utilizes acyl-phosphate as fatty acyl donor, but not acyl-CoA or acyl-ACP. The polypeptide is Glycerol-3-phosphate acyltransferase (Erythrobacter litoralis (strain HTCC2594)).